The following is a 90-amino-acid chain: Evasin P1126 (90 aa).

An N-terminal signal peptide occupies residues 1–25 (MTSHSAVRIAIFAVIALHSIFECLS). 3 disulfides stabilise this stretch: C46-C62, C50-C64, and C58-C75. N55 is a glycosylation site (N-linked (GlcNAc...) asparagine). N-linked (GlcNAc...) asparagine glycosylation is present at N77.

It localises to the secreted. In terms of biological role, salivary chemokine-binding protein which binds to host chemokines CXCL1, CXCL2, CXCL3, CXCL4, CXCL5, CXCL6, CXCL7, CXCL10 and CXCL11. The polypeptide is Evasin P1126 (Amblyomma cajennense (Cayenne tick)).